A 121-amino-acid chain; its full sequence is Chronic lymphocytic leukemia up-regulated protein 1 (121 aa).

Specifically expressed in chronic lymphocytic leukemia (CLL) cells from patients without immunoglobulin heavy-chain hypermutations. Expression is detected in all CLL cells and levels are similar in patients before and after treatment.

The protein resides in the cytoplasm. This Homo sapiens (Human) protein is Chronic lymphocytic leukemia up-regulated protein 1 (CLLU1).